The primary structure comprises 314 residues: 4-hydroxy-3-methylbut-2-enyl diphosphate reductase (314 aa).

Cys-12 serves as a coordination point for [4Fe-4S] cluster. Residues His-41 and His-74 each contribute to the (2E)-4-hydroxy-3-methylbut-2-enyl diphosphate site. Positions 41 and 74 each coordinate dimethylallyl diphosphate. Positions 41 and 74 each coordinate isopentenyl diphosphate. Residue Cys-96 coordinates [4Fe-4S] cluster. His-124 lines the (2E)-4-hydroxy-3-methylbut-2-enyl diphosphate pocket. Dimethylallyl diphosphate is bound at residue His-124. His-124 is an isopentenyl diphosphate binding site. Glu-126 acts as the Proton donor in catalysis. Thr-168 lines the (2E)-4-hydroxy-3-methylbut-2-enyl diphosphate pocket. Cys-198 lines the [4Fe-4S] cluster pocket. The (2E)-4-hydroxy-3-methylbut-2-enyl diphosphate site is built by Ser-226, Ser-227, Asn-228, and Ser-270. The dimethylallyl diphosphate site is built by Ser-226, Ser-227, Asn-228, and Ser-270. Residues Ser-226, Ser-227, Asn-228, and Ser-270 each coordinate isopentenyl diphosphate.

The protein belongs to the IspH family. [4Fe-4S] cluster serves as cofactor.

It carries out the reaction isopentenyl diphosphate + 2 oxidized [2Fe-2S]-[ferredoxin] + H2O = (2E)-4-hydroxy-3-methylbut-2-enyl diphosphate + 2 reduced [2Fe-2S]-[ferredoxin] + 2 H(+). The catalysed reaction is dimethylallyl diphosphate + 2 oxidized [2Fe-2S]-[ferredoxin] + H2O = (2E)-4-hydroxy-3-methylbut-2-enyl diphosphate + 2 reduced [2Fe-2S]-[ferredoxin] + 2 H(+). It functions in the pathway isoprenoid biosynthesis; dimethylallyl diphosphate biosynthesis; dimethylallyl diphosphate from (2E)-4-hydroxy-3-methylbutenyl diphosphate: step 1/1. The protein operates within isoprenoid biosynthesis; isopentenyl diphosphate biosynthesis via DXP pathway; isopentenyl diphosphate from 1-deoxy-D-xylulose 5-phosphate: step 6/6. Its function is as follows. Catalyzes the conversion of 1-hydroxy-2-methyl-2-(E)-butenyl 4-diphosphate (HMBPP) into a mixture of isopentenyl diphosphate (IPP) and dimethylallyl diphosphate (DMAPP). Acts in the terminal step of the DOXP/MEP pathway for isoprenoid precursor biosynthesis. The chain is 4-hydroxy-3-methylbut-2-enyl diphosphate reductase from Pseudomonas aeruginosa (strain LESB58).